Reading from the N-terminus, the 243-residue chain is tRNA (guanine-N(1)-)-methyltransferase (243 aa).

S-adenosyl-L-methionine is bound by residues Gly-111 and 131-136 (IGDYVL).

The protein belongs to the RNA methyltransferase TrmD family. Homodimer.

It is found in the cytoplasm. It carries out the reaction guanosine(37) in tRNA + S-adenosyl-L-methionine = N(1)-methylguanosine(37) in tRNA + S-adenosyl-L-homocysteine + H(+). Functionally, specifically methylates guanosine-37 in various tRNAs. In Brevibacillus brevis (strain 47 / JCM 6285 / NBRC 100599), this protein is tRNA (guanine-N(1)-)-methyltransferase.